The chain runs to 274 residues: HMP-PP phosphatase (274 aa).

The Nucleophile role is filled by Asp8. Positions 8, 10, and 213 each coordinate Mg(2+).

It belongs to the HAD-like hydrolase superfamily. Cof family. Mg(2+) serves as cofactor.

It catalyses the reaction 4-amino-2-methyl-5-(diphosphooxymethyl)pyrimidine + H2O = 4-amino-2-methyl-5-(phosphooxymethyl)pyrimidine + phosphate + H(+). In terms of biological role, catalyzes the hydrolysis of 4-amino-2-methyl-5-hydroxymethylpyrimidine pyrophosphate (HMP-PP) to 4-amino-2-methyl-5-hydroxymethylpyrimidine phosphate (HMP-P). The polypeptide is HMP-PP phosphatase (Serratia proteamaculans (strain 568)).